The primary structure comprises 62 residues: uncharacterized protein (62 aa).

This is an uncharacterized protein from Acidianus filamentous virus 2 (isolate Italy/Pozzuoli) (AFV-2).